The chain runs to 177 residues: ATP synthase subunit delta (177 aa).

It belongs to the ATPase delta chain family. In terms of assembly, F-type ATPases have 2 components, F(1) - the catalytic core - and F(0) - the membrane proton channel. F(1) has five subunits: alpha(3), beta(3), gamma(1), delta(1), epsilon(1). F(0) has three main subunits: a(1), b(2) and c(10-14). The alpha and beta chains form an alternating ring which encloses part of the gamma chain. F(1) is attached to F(0) by a central stalk formed by the gamma and epsilon chains, while a peripheral stalk is formed by the delta and b chains.

It localises to the cell inner membrane. Functionally, f(1)F(0) ATP synthase produces ATP from ADP in the presence of a proton or sodium gradient. F-type ATPases consist of two structural domains, F(1) containing the extramembraneous catalytic core and F(0) containing the membrane proton channel, linked together by a central stalk and a peripheral stalk. During catalysis, ATP synthesis in the catalytic domain of F(1) is coupled via a rotary mechanism of the central stalk subunits to proton translocation. Its function is as follows. This protein is part of the stalk that links CF(0) to CF(1). It either transmits conformational changes from CF(0) to CF(1) or is implicated in proton conduction. The protein is ATP synthase subunit delta of Shewanella frigidimarina (strain NCIMB 400).